Here is a 410-residue protein sequence, read N- to C-terminus: Phosphoglycerate kinase (410 aa).

Residues 19–21 (DLN), arginine 34, 57–60 (HQGK), arginine 114, and arginine 154 each bind substrate. ATP contacts are provided by residues glutamate 332 and 358 to 361 (GGHS).

Belongs to the phosphoglycerate kinase family. As to quaternary structure, homodimer.

The protein resides in the cytoplasm. It carries out the reaction (2R)-3-phosphoglycerate + ATP = (2R)-3-phospho-glyceroyl phosphate + ADP. The protein operates within carbohydrate degradation; glycolysis; pyruvate from D-glyceraldehyde 3-phosphate: step 2/5. This Pyrococcus abyssi (strain GE5 / Orsay) protein is Phosphoglycerate kinase (pgk).